The sequence spans 431 residues: Adenylosuccinate synthetase (431 aa).

Residues G12–K18 and G40–T42 each bind GTP. D13 serves as the catalytic Proton acceptor. Mg(2+) is bound by residues D13 and G40. Residues D13–K16, N38–H41, T128, R142, Q223, T238, and R301 contribute to the IMP site. The active-site Proton donor is the H41. T297–R303 contributes to the substrate binding site. GTP-binding positions include R303, S329–D331, and S411–G413.

The protein belongs to the adenylosuccinate synthetase family. Homodimer. Mg(2+) is required as a cofactor.

It localises to the cytoplasm. The catalysed reaction is IMP + L-aspartate + GTP = N(6)-(1,2-dicarboxyethyl)-AMP + GDP + phosphate + 2 H(+). It functions in the pathway purine metabolism; AMP biosynthesis via de novo pathway; AMP from IMP: step 1/2. Functionally, plays an important role in the de novo pathway of purine nucleotide biosynthesis. Catalyzes the first committed step in the biosynthesis of AMP from IMP. The sequence is that of Adenylosuccinate synthetase from Lacticaseibacillus paracasei (strain ATCC 334 / BCRC 17002 / CCUG 31169 / CIP 107868 / KCTC 3260 / NRRL B-441) (Lactobacillus paracasei).